The primary structure comprises 398 residues: Putative defective protein IntQ (398 aa).

Residues 51 to 146 (LTIKELAEKF…NLNAVFQFGV (96 aa)) enclose the Core-binding (CB) domain. The 212-residue stretch at 167–378 (TIPDPLSREE…SENNNAQVAL (212 aa)) folds into the Tyr recombinase domain. Residues Arg-202, Lys-236, Arg-331, and His-354 contribute to the active site. Tyr-364 functions as the O-(3'-phospho-DNA)-tyrosine intermediate in the catalytic mechanism.

Belongs to the 'phage' integrase family.

Functionally, integrase is necessary for integration of the phage into the host genome by site-specific recombination. In conjunction with excisionase, integrase is also necessary for excision of the prophage from the host genome. The chain is Putative defective protein IntQ (intQ) from Escherichia coli (strain K12).